The primary structure comprises 429 residues: Serine hydroxymethyltransferase (429 aa).

Residues Leu-125 and 129 to 131 (GHL) contribute to the (6S)-5,6,7,8-tetrahydrofolate site. Position 234 is an N6-(pyridoxal phosphate)lysine (Lys-234).

The protein belongs to the SHMT family. As to quaternary structure, homodimer. Requires pyridoxal 5'-phosphate as cofactor.

The protein localises to the cytoplasm. It catalyses the reaction (6R)-5,10-methylene-5,6,7,8-tetrahydrofolate + glycine + H2O = (6S)-5,6,7,8-tetrahydrofolate + L-serine. It functions in the pathway one-carbon metabolism; tetrahydrofolate interconversion. Its pathway is amino-acid biosynthesis; glycine biosynthesis; glycine from L-serine: step 1/1. Functionally, catalyzes the reversible interconversion of serine and glycine with tetrahydrofolate (THF) serving as the one-carbon carrier. This reaction serves as the major source of one-carbon groups required for the biosynthesis of purines, thymidylate, methionine, and other important biomolecules. Also exhibits THF-independent aldolase activity toward beta-hydroxyamino acids, producing glycine and aldehydes, via a retro-aldol mechanism. The polypeptide is Serine hydroxymethyltransferase (Allorhizobium ampelinum (strain ATCC BAA-846 / DSM 112012 / S4) (Agrobacterium vitis (strain S4))).